The sequence spans 21 residues: S-layer protein 2 (21 aa).

It is found in the secreted. Its subcellular location is the cell wall. The protein resides in the S-layer. In terms of biological role, the S-layer is a paracrystalline mono-layered assembly of proteins which coat the surface of bacteria. The polypeptide is S-layer protein 2 (Bacillus thuringiensis subsp. konkukian).